The chain runs to 223 residues: Small ribosomal subunit protein uS3 (223 aa).

The KH type-2 domain maps to 38–106; it reads IRKFLDEKLK…QVHINIVEIK (69 aa).

Belongs to the universal ribosomal protein uS3 family. In terms of assembly, part of the 30S ribosomal subunit. Forms a tight complex with proteins S10 and S14.

In terms of biological role, binds the lower part of the 30S subunit head. Binds mRNA in the 70S ribosome, positioning it for translation. In Lactobacillus delbrueckii subsp. bulgaricus (strain ATCC 11842 / DSM 20081 / BCRC 10696 / JCM 1002 / NBRC 13953 / NCIMB 11778 / NCTC 12712 / WDCM 00102 / Lb 14), this protein is Small ribosomal subunit protein uS3.